We begin with the raw amino-acid sequence, 281 residues long: Splicing regulator RBM11 (281 aa).

The RRM domain maps to 10 to 87 (RTVFVGNLEA…RPINVQYRFG (78 aa)). The disordered stretch occupies residues 184-281 (PSSYKWTHQQ…FRKSKKKKRY (98 aa)). Polar residues-rich tracts occupy residues 187 to 217 (YKWT…SSLN) and 229 to 242 (YKWT…SDLY). The Bipartite nuclear localization signal motif lies at 245–280 (NKRKRQKQTSDSDSSTDNNRGNECSQKFRKSKKKKR). Residues 271–281 (KFRKSKKKKRY) are compositionally biased toward basic residues.

In terms of assembly, homodimer. Expressed in brain, hippocampus, prefrontal cortex, cerebellum, spinal cord, testis, mammary gland, spleen and kidney. Also expressed in fetal brain.

The protein resides in the nucleus. The protein localises to the nucleoplasm. It localises to the nucleus speckle. Functionally, tissue-specific splicing factor with potential implication in the regulation of alternative splicing during neuron and germ cell differentiation. Antagonizes SRSF1-mediated BCL-X splicing. May affect the choice of alternative 5' splice sites by binding to specific sequences in exons and antagonizing the SR protein SRSF1. In Homo sapiens (Human), this protein is Splicing regulator RBM11.